Consider the following 372-residue polypeptide: Adaptive-response sensory kinase SasA (372 aa).

The Histidine kinase domain maps to 147 to 360 (MVAHELRTPL…CFHFTVPVWQ (214 aa)). A Phosphohistidine; by autocatalysis modification is found at His-150.

Homooligomerizes. Interacts with KaiC. Participates in the KaiBC complex, whose core is composed of a KaiC homohexamer and 6 KaiB.

It carries out the reaction ATP + protein L-histidine = ADP + protein N-phospho-L-histidine.. In terms of biological role, member of the two-component regulatory system SasA/RpaA involved in genome-wide circadian gene expression. One of several clock output pathways. Participates in the Kai clock protein complex, the main circadian regulator in cyanobacteria, via its interaction with KaiC. KaiC enhances the autophosphorylation activity of SasA, which then transfers its phosphate group to RpaA to activate it. In addition to its output function, recruits fold-shifted KaiB (KaiB(fs)) to KaiC to cooperatively form the KaiB(6):KaiC(6) complex (independent of SasA kinase activity). Required for robustness of the circadian rhythm of gene expression and is involved in clock output, also required for adaptation to light/dark cycles. The polypeptide is Adaptive-response sensory kinase SasA (Prochlorococcus marinus (strain MIT 9215)).